Reading from the N-terminus, the 226-residue chain is DELTA-alicitoxin-Pse1b (226 aa).

The N-terminal stretch at 1 to 21 (MRHFVVFLYMFLALSIPTAFA) is a signal peptide. A propeptide spanning residues 22 to 45 (KKHIVTKKGNHQDITNDNEGENAE) is cleaved from the precursor. Residues 50-59 (TVAGAVIAGG) are plays an important role in the hemolytic activity. Positions 58–77 (GGELALKILTKILYEIGKID) are N-terminal region. Phosphocholine is bound by residues S101, V134, S152, P154, Y180, and Y184. Residues 152-167 (SVPFDYNLYSNWWNVK) are trp-rich region, which is important for the binding to lipid membrane.

Belongs to the actinoporin family. Sea anemone subfamily. Octamer or nonamer in membranes. Monomer in the soluble state.

The protein localises to the secreted. It localises to the nematocyst. The protein resides in the target cell membrane. Pore-forming protein that forms cations-selective hydrophilic pores of around 1 nm and causes cytolysis. Pore formation is a multi-step process that involves specific recognition of membrane sphingomyelin (but neither cholesterol nor phosphatidylcholine) using aromatic rich region and adjacent phosphocholine (POC) binding site, firm binding to the membrane (mainly driven by hydrophobic interactions) accompanied by the transfer of the N-terminal region to the lipid-water interface and finally pore formation after oligomerization of monomers. The protein is DELTA-alicitoxin-Pse1b of Phyllodiscus semoni (Night anemone).